The sequence spans 568 residues: Glycine--tRNA ligase (568 aa).

Positions 97 and 163 each coordinate substrate. ATP-binding positions include 195-197 (RNE), 205-210 (IRLREF), 322-323 (EC), and 441-444 (GIDR). Position 210 to 214 (210 to 214 (FTQAE)) interacts with substrate. Residue 437–441 (EPSFG) coordinates substrate.

The protein belongs to the class-II aminoacyl-tRNA synthetase family.

It localises to the cytoplasm. It carries out the reaction tRNA(Gly) + glycine + ATP = glycyl-tRNA(Gly) + AMP + diphosphate. Its function is as follows. Catalyzes the attachment of glycine to tRNA(Gly). The sequence is that of Glycine--tRNA ligase from Pyrococcus furiosus (strain ATCC 43587 / DSM 3638 / JCM 8422 / Vc1).